A 288-amino-acid polypeptide reads, in one-letter code: Pyridoxal kinase PdxY (288 aa).

Substrate-binding positions include S9 and 44-45 (TQ). Residues D111, E148, and K181 each coordinate ATP. Substrate is bound at residue D224.

The protein belongs to the pyridoxine kinase family. PdxY subfamily. In terms of assembly, homodimer. It depends on Mg(2+) as a cofactor.

The enzyme catalyses pyridoxal + ATP = pyridoxal 5'-phosphate + ADP + H(+). The protein operates within cofactor metabolism; pyridoxal 5'-phosphate salvage; pyridoxal 5'-phosphate from pyridoxal: step 1/1. In terms of biological role, pyridoxal kinase involved in the salvage pathway of pyridoxal 5'-phosphate (PLP). Catalyzes the phosphorylation of pyridoxal to PLP. This chain is Pyridoxal kinase PdxY, found in Haemophilus influenzae (strain ATCC 51907 / DSM 11121 / KW20 / Rd).